Reading from the N-terminus, the 130-residue chain is Small ribosomal subunit protein uS9 (130 aa).

Belongs to the universal ribosomal protein uS9 family.

This is Small ribosomal subunit protein uS9 from Yersinia pseudotuberculosis serotype O:1b (strain IP 31758).